A 357-amino-acid chain; its full sequence is 39 kDa FK506-binding nuclear protein (357 aa).

S92 is modified (phosphoserine). The segment at 113–251 (KNSKKSEDDE…ASKDPRTITG (139 aa)) is disordered. Positions 120-182 (DDEDENESGE…QDSDDSEAEE (63 aa)) are enriched in acidic residues. Phosphoserine occurs at positions 193 and 197. Positions 222-237 (EKPEAKKEQPKAKEPA) are enriched in basic and acidic residues. In terms of domain architecture, PPIase FKBP-type spans 269–357 (GKRVSVYYIG…VFEVELKAVH (89 aa)).

This sequence belongs to the FKBP-type PPIase family. In terms of tissue distribution, ubiquitously expressed, highest levels in ovary.

It localises to the nucleus. It carries out the reaction [protein]-peptidylproline (omega=180) = [protein]-peptidylproline (omega=0). PPIases accelerate the folding of proteins. May function in a signal transduction cascade during early development. The polypeptide is 39 kDa FK506-binding nuclear protein (Drosophila melanogaster (Fruit fly)).